The following is a 321-amino-acid chain: Glucokinase (321 aa).

8–13 (GDVGGT) is a binding site for ATP.

This sequence belongs to the bacterial glucokinase family.

Its subcellular location is the cytoplasm. The catalysed reaction is D-glucose + ATP = D-glucose 6-phosphate + ADP + H(+). The chain is Glucokinase from Klebsiella pneumoniae subsp. pneumoniae (strain ATCC 700721 / MGH 78578).